Reading from the N-terminus, the 154-residue chain is Avirulence protein ATR13 (154 aa).

The signal sequence occupies residues 1 to 19 (MRLVHAVLLPGIIVFVSNG). The RxLR signature appears at 38–41 (RQLR). The interval 50-92 (LSRASFGLGKAQDPLDKFFSKIIFSGKPIETSYSAKGIHEKII) is leucine heptad repeat region. Residues 93 to 103 (EAHDLHVSKSK) are single repeat region. The segment at 104–154 (NAPIQYASVMEYLKKTYPGPDIERIVSTLERHDEVGAKDLGAKLRDALDRQ) is highly variable C-terminus domain.

The protein belongs to the RxLR effector family.

The protein localises to the secreted. It is found in the host cytoplasm. Functionally, secreted effector that acts as an elicitor of hypersensitive response (HR) specifically on plants carrying defense protein RPP13. Recognition of ATR13 by RPP13 initiates defense responses that are effective against oomycete, bacterial and viral pathogens. The allele ATR13-Emco5 recognizes RPP13-Nd, the RPP13 defense protein from Arabidopsis thaliana ecotype Niederzenz. The chain is Avirulence protein ATR13 from Hyaloperonospora arabidopsidis (Peronospora arabidopsidis).